We begin with the raw amino-acid sequence, 114 residues long: Probable 4-amino-4-deoxy-L-arabinose-phosphoundecaprenol flippase subunit ArnE (114 aa).

3 consecutive transmembrane segments (helical) span residues 41 to 61 (PWLI…IYLL), 64 to 84 (LPLS…LVGS), and 94 to 114 (YHNW…GGLL). The region spanning 43 to 112 (LIASVAALGC…IIVGALLLGG (70 aa)) is the EamA domain.

Belongs to the ArnE family. In terms of assembly, heterodimer of ArnE and ArnF.

It localises to the cell inner membrane. It participates in bacterial outer membrane biogenesis; lipopolysaccharide biosynthesis. In terms of biological role, translocates 4-amino-4-deoxy-L-arabinose-phosphoundecaprenol (alpha-L-Ara4N-phosphoundecaprenol) from the cytoplasmic to the periplasmic side of the inner membrane. The sequence is that of Probable 4-amino-4-deoxy-L-arabinose-phosphoundecaprenol flippase subunit ArnE from Aeromonas hydrophila subsp. hydrophila (strain ATCC 7966 / DSM 30187 / BCRC 13018 / CCUG 14551 / JCM 1027 / KCTC 2358 / NCIMB 9240 / NCTC 8049).